We begin with the raw amino-acid sequence, 872 residues long: Dynein regulatory complex subunit 7 (872 aa).

Disordered regions lie at residues 1-40 (MEVL…REET), 231-281 (ESVK…QEEA), and 385-410 (EEED…KSFD). Residues 1–64 (MEVLKEKVEE…SEIEVSVPEK (64 aa)) adopt a coiled-coil conformation. Composition is skewed to basic and acidic residues over residues 16–40 (REEA…REET), 231–240 (ESVKEEEKAP), and 248–281 (PPRD…QEEA). The stretch at 254–292 (SRFEQEQEMKRQEAIKAEEENRRKQEEARLLEQENAKTD) forms a coiled coil. Acidic residues predominate over residues 385-398 (EEEDEGMNDDDDVE). The segment covering 399–409 (NLGKEDEDKSF) has biased composition (basic and acidic residues). 2 coiled-coil regions span residues 676-706 (LKNE…EEEE) and 780-805 (QRLI…KKQQ).

It belongs to the DRC7 family. In terms of assembly, component of the nexin-dynein regulatory complex (N-DRC). Interacts with TCTE1/DRC5. Interacts with DRC3 and GAS8/DRC4.

It localises to the cell projection. It is found in the cilium. The protein localises to the flagellum. The protein resides in the cytoplasm. Its subcellular location is the cytoskeleton. It localises to the cilium axoneme. It is found in the flagellum axoneme. Functionally, component of the nexin-dynein regulatory complex (N-DRC) a key regulator of ciliary/flagellar motility which maintains the alignment and integrity of the distal axoneme and regulates microtubule sliding in motile axonemes. Involved in the regulation of flagellar motility. Essential for male fertility, sperm head morphogenesis and sperm flagellum formation. The protein is Dynein regulatory complex subunit 7 (DRC7) of Bos taurus (Bovine).